The following is a 291-amino-acid chain: MIQIFFLGTGAGSPSKKRKLPAFLVRREGVNILLDCGEGTQYTLMNYKLGINSIKIIGISHMHGDHVFGLLGVIASMGLLDRKETLYILGPRKLKDFLYTSFEYSKFNPSFKIEFIDNYNDENITISTFKTCHTIESQGYLIMEKDRVKIDEEKLEKEKIRDWRVIRKLKEGKTVEYNGKLLKPEDYLVIKRGSKVAYTGDTMPCQSVVDSVKGVDILIHDSTFLDEPSAYTYGHSNVTDAAKIALEASVKLLALTHISPRYEDVSEHLKMARRIFPKSILPDDLSYITIK.

The Zn(2+) site is built by His61, His63, Asp65, His66, His133, Asp201, and His257. Asp65 serves as the catalytic Proton acceptor.

The protein belongs to the RNase Z family. In terms of assembly, homodimer. Zn(2+) is required as a cofactor.

It catalyses the reaction Endonucleolytic cleavage of RNA, removing extra 3' nucleotides from tRNA precursor, generating 3' termini of tRNAs. A 3'-hydroxy group is left at the tRNA terminus and a 5'-phosphoryl group is left at the trailer molecule.. In terms of biological role, zinc phosphodiesterase, which displays some tRNA 3'-processing endonuclease activity. Probably involved in tRNA maturation, by removing a 3'-trailer from precursor tRNA. The protein is Ribonuclease Z of Saccharolobus solfataricus (strain ATCC 35092 / DSM 1617 / JCM 11322 / P2) (Sulfolobus solfataricus).